We begin with the raw amino-acid sequence, 220 residues long: Ribose-5-phosphate isomerase A (220 aa).

Residues T28–T31, D81–D84, and K94–G97 contribute to the substrate site. E103 serves as the catalytic Proton acceptor. K121 serves as a coordination point for substrate.

The protein belongs to the ribose 5-phosphate isomerase family. In terms of assembly, homodimer.

It carries out the reaction aldehydo-D-ribose 5-phosphate = D-ribulose 5-phosphate. It functions in the pathway carbohydrate degradation; pentose phosphate pathway; D-ribose 5-phosphate from D-ribulose 5-phosphate (non-oxidative stage): step 1/1. Its function is as follows. Catalyzes the reversible conversion of ribose-5-phosphate to ribulose 5-phosphate. The polypeptide is Ribose-5-phosphate isomerase A (Coxiella burnetii (strain CbuK_Q154) (Coxiella burnetii (strain Q154))).